We begin with the raw amino-acid sequence, 581 residues long: Arginine--tRNA ligase (581 aa).

Positions 126 to 136 (PNLAKEMHVGH) match the 'HIGH' region motif.

This sequence belongs to the class-I aminoacyl-tRNA synthetase family. As to quaternary structure, monomer.

The protein resides in the cytoplasm. The enzyme catalyses tRNA(Arg) + L-arginine + ATP = L-arginyl-tRNA(Arg) + AMP + diphosphate. The sequence is that of Arginine--tRNA ligase from Shewanella frigidimarina (strain NCIMB 400).